The chain runs to 220 residues: U1 small nuclear ribonucleoprotein C (220 aa).

The Matrin-type zinc finger occupies 4 to 36 (YYCDYCDIYLTHDSMNARKAHNSGRNHVANVRD). Composition is skewed to pro residues over residues 88 to 130 (PGPP…PFLP) and 147 to 165 (PPFP…PFRP). The segment at 88–220 (PGPPPPGAFP…HPDRLRMLGQ (133 aa)) is disordered. The segment covering 166-200 (PMGMGMPPAPAQAQAQGSPMGMPQQGQQGTFTPTQ) has biased composition (low complexity). Basic and acidic residues predominate over residues 211 to 220 (HPDRLRMLGQ).

Belongs to the U1 small nuclear ribonucleoprotein C family. In terms of assembly, U1 snRNP is composed of the 7 core Sm proteins B/B', D1, D2, D3, E, F and G that assemble in a heptameric protein ring on the Sm site of the small nuclear RNA to form the core snRNP, and at least 3 U1 snRNP-specific proteins U1-70K, U1-A and U1-C. U1-C interacts with U1 snRNA and the 5' splice-site region of the pre-mRNA.

It localises to the nucleus. In terms of biological role, component of the spliceosomal U1 snRNP, which is essential for recognition of the pre-mRNA 5' splice-site and the subsequent assembly of the spliceosome. U1-C is directly involved in initial 5' splice-site recognition for both constitutive and regulated alternative splicing. The interaction with the 5' splice-site seems to precede base-pairing between the pre-mRNA and the U1 snRNA. Stimulates commitment or early (E) complex formation by stabilizing the base pairing of the 5' end of the U1 snRNA and the 5' splice-site region. This chain is U1 small nuclear ribonucleoprotein C, found in Cryptococcus neoformans var. neoformans serotype D (strain JEC21 / ATCC MYA-565) (Filobasidiella neoformans).